A 932-amino-acid chain; its full sequence is DNA mismatch repair protein MutS (932 aa).

615–622 (GPNMAGKS) serves as a coordination point for ATP.

This sequence belongs to the DNA mismatch repair MutS family.

This protein is involved in the repair of mismatches in DNA. It is possible that it carries out the mismatch recognition step. This protein has a weak ATPase activity. The sequence is that of DNA mismatch repair protein MutS from Clostridium botulinum (strain 657 / Type Ba4).